The sequence spans 625 residues: Folylpolyglutamate synthase (625 aa).

141-144 (GKGS) is a binding site for ATP. Mg(2+) contacts are provided by serine 165, glutamate 234, and histidine 262. 2 residues coordinate ATP: arginine 384 and aspartate 414.

This sequence belongs to the folylpolyglutamate synthase family. Requires a monovalent cation as cofactor.

It is found in the mitochondrion inner membrane. It localises to the mitochondrion matrix. It catalyses the reaction (6S)-5,6,7,8-tetrahydrofolyl-(gamma-L-Glu)(n) + L-glutamate + ATP = (6S)-5,6,7,8-tetrahydrofolyl-(gamma-L-Glu)(n+1) + ADP + phosphate + H(+). It functions in the pathway cofactor biosynthesis; tetrahydrofolylpolyglutamate biosynthesis. In terms of biological role, catalyzes conversion of folates to polyglutamate derivatives allowing concentration of folate compounds in the cell and the intracellular retention of these cofactors, which are important substrates for most of the folate-dependent enzymes that are involved in one-carbon transfer reactions involved in purine, pyrimidine and amino acid synthesis. Essential for organellar and whole-plant folate homeostasis. The polypeptide is Folylpolyglutamate synthase (Arabidopsis thaliana (Mouse-ear cress)).